The chain runs to 266 residues: Small ribosomal subunit protein eS1 (266 aa).

A disordered region spans residues 236–266 (GAGTAAKATGDDTGAKVERADGYEPPIQESV). The span at 244–257 (TGDDTGAKVERADG) shows a compositional bias: basic and acidic residues.

The protein belongs to the eukaryotic ribosomal protein eS1 family. In terms of assembly, component of the small ribosomal subunit. Mature ribosomes consist of a small (40S) and a large (60S) subunit. The 40S subunit contains about 33 different proteins and 1 molecule of RNA (18S). The 60S subunit contains about 49 different proteins and 3 molecules of RNA (28S, 5.8S and 5S). Part of the small subunit (SSU) processome, composed of more than 70 proteins and the RNA chaperone small nucleolar RNA (snoRNA) U3.

The protein resides in the cytoplasm. It is found in the nucleus. Its subcellular location is the nucleolus. In terms of biological role, component of the small ribosomal subunit. The ribosome is a large ribonucleoprotein complex responsible for the synthesis of proteins in the cell. Part of the small subunit (SSU) processome, first precursor of the small eukaryotic ribosomal subunit. During the assembly of the SSU processome in the nucleolus, many ribosome biogenesis factors, an RNA chaperone and ribosomal proteins associate with the nascent pre-rRNA and work in concert to generate RNA folding, modifications, rearrangements and cleavage as well as targeted degradation of pre-ribosomal RNA by the RNA exosome. May play a role during erythropoiesis. In Tetraodon nigroviridis (Spotted green pufferfish), this protein is Small ribosomal subunit protein eS1 (rps3a).